We begin with the raw amino-acid sequence, 502 residues long: UPF0371 protein CLJ_B0384 (502 aa).

It belongs to the UPF0371 family.

The protein is UPF0371 protein CLJ_B0384 of Clostridium botulinum (strain 657 / Type Ba4).